We begin with the raw amino-acid sequence, 459 residues long: V-type ATP synthase beta chain (459 aa).

This sequence belongs to the ATPase alpha/beta chains family.

Produces ATP from ADP in the presence of a proton gradient across the membrane. The V-type beta chain is a regulatory subunit. The sequence is that of V-type ATP synthase beta chain from Clostridium botulinum (strain Alaska E43 / Type E3).